Reading from the N-terminus, the 220-residue chain is Deoxyribose-phosphate aldolase (220 aa).

The Proton donor/acceptor role is filled by aspartate 89. Catalysis depends on lysine 151, which acts as the Schiff-base intermediate with acetaldehyde. Lysine 180 functions as the Proton donor/acceptor in the catalytic mechanism.

The protein belongs to the DeoC/FbaB aldolase family. DeoC type 1 subfamily.

The protein resides in the cytoplasm. The enzyme catalyses 2-deoxy-D-ribose 5-phosphate = D-glyceraldehyde 3-phosphate + acetaldehyde. The protein operates within carbohydrate degradation; 2-deoxy-D-ribose 1-phosphate degradation; D-glyceraldehyde 3-phosphate and acetaldehyde from 2-deoxy-alpha-D-ribose 1-phosphate: step 2/2. Catalyzes a reversible aldol reaction between acetaldehyde and D-glyceraldehyde 3-phosphate to generate 2-deoxy-D-ribose 5-phosphate. In Lactococcus lactis subsp. lactis (strain IL1403) (Streptococcus lactis), this protein is Deoxyribose-phosphate aldolase.